Consider the following 322-residue polypeptide: DNA repair and recombination protein RadA (322 aa).

105–112 provides a ligand contact to ATP; it reads GMFGSGKT.

Belongs to the eukaryotic RecA-like protein family.

Involved in DNA repair and in homologous recombination. Binds and assemble on single-stranded DNA to form a nucleoprotein filament. Hydrolyzes ATP in a ssDNA-dependent manner and promotes DNA strand exchange between homologous DNA molecules. This is DNA repair and recombination protein RadA from Methanococcus maripaludis (Methanococcus deltae).